We begin with the raw amino-acid sequence, 782 residues long: LPS-assembly protein LptD (782 aa).

A signal peptide spans 1 to 23 (MNKKHTLISLAILTALYSQQSLA).

It belongs to the LptD family. In terms of assembly, component of the lipopolysaccharide transport and assembly complex. Interacts with LptE and LptA.

It is found in the cell outer membrane. Functionally, together with LptE, is involved in the assembly of lipopolysaccharide (LPS) at the surface of the outer membrane. In Haemophilus influenzae (strain 86-028NP), this protein is LPS-assembly protein LptD.